A 1588-amino-acid polypeptide reads, in one-letter code: Multicopy suppressor of chk1 protein 1 (1588 aa).

The tract at residues 38–60 is disordered; sequence HAKPSTQQQQQQQNISNETTSTG. Polar residues predominate over residues 51 to 60; it reads NISNETTSTG. The 43-residue stretch at 82-124 folds into the JmjN domain; it reads NVRVTPKKEEFSRGLDFISDLYDQTARKSGAVRVIPPDNWKCP. The PHD-type 1 zinc-finger motif lies at 298–345; the sequence is KCKLCAQEGSSLVTCCICQSNYHYACVEAPFAPFSDIHYWTCNSCIPS. Residues 385 to 395 are compositionally biased toward polar residues; that stretch reads PLTLPSNTKTP. The interval 385–412 is disordered; sequence PLTLPSNTKTPPASARQSSRRTRSTSGK. Positions 475-645 constitute a JmjC domain; the sequence is FPTSRQNAYY…DMHAENSFNM (171 aa). A disordered region spans residues 848–872; it reads EKRKPKRGSATHSHLESPSEEVEDL. The PHD-type 2 zinc finger occupies 1171 to 1220; sequence FHYCFCRQPEAGMMIECELCHEWYHAKCMKMSKKKLRADEKFICPICDYR. The segment at 1319–1341 is disordered; sequence APQPPPFIGESRSNRKPRPTKRQ. A PHD-type 3 zinc finger spans residues 1454-1505; the sequence is SVICLCRQPFAISDGTVQCHNCLEWFHYECVGLSSDIVSTLSNYACPDCCSK.

Its subcellular location is the nucleus. Its function is as follows. Has a role in regulating chromatin structure via global deacetylation of histone H3. This function is associated with the activity of a histone deacetylase. The sequence is that of Multicopy suppressor of chk1 protein 1 (msc1) from Schizosaccharomyces pombe (strain 972 / ATCC 24843) (Fission yeast).